The sequence spans 227 residues: 2,3-bisphosphoglycerate-dependent phosphoglycerate mutase (227 aa).

Substrate contacts are provided by residues 7 to 14, 20 to 21, Arg-59, 86 to 89, Lys-97, 113 to 114, and 182 to 183; these read RHGQSEWN, TG, ERHY, RR, and GN. His-8 serves as the catalytic Tele-phosphohistidine intermediate. The Proton donor/acceptor role is filled by Glu-86.

Belongs to the phosphoglycerate mutase family. BPG-dependent PGAM subfamily. As to quaternary structure, homodimer.

The enzyme catalyses (2R)-2-phosphoglycerate = (2R)-3-phosphoglycerate. Its pathway is carbohydrate degradation; glycolysis; pyruvate from D-glyceraldehyde 3-phosphate: step 3/5. Its function is as follows. Catalyzes the interconversion of 2-phosphoglycerate and 3-phosphoglycerate. This is 2,3-bisphosphoglycerate-dependent phosphoglycerate mutase from Neisseria meningitidis serogroup C / serotype 2a (strain ATCC 700532 / DSM 15464 / FAM18).